Consider the following 79-residue polypeptide: U-actitoxin-Bgr3d (79 aa).

The N-terminal stretch at 1 to 21 (MSYERLLCLVLVASFIAASVA) is a signal peptide. Residues 22-38 (QHPGDAPRMEDDSSAIQ) constitute a propeptide that is removed on maturation. 3 disulfide bridges follow: C44–C76, C46–C69, and C59–C77.

It belongs to the sea anemone type 3 (BDS) potassium channel toxin family.

It localises to the secreted. The protein resides in the nematocyst. Functionally, potently and selectively inhibits voltage-gated potassium channels Kv11/KCNH/ERG. Acts as a gating-modifier toxin that shifts the voltage-dependence of ERG activation in the positive direction and suppresses its current amplitudes elicited by strong depolarizing pulses that maximally activate the channels. The sequence is that of U-actitoxin-Bgr3d from Bunodosoma granuliferum (Red warty sea anemone).